We begin with the raw amino-acid sequence, 315 residues long: Olfactory receptor 5P59 (315 aa).

Over 1-28 (MAFLQDGNHTAVTEFILLGLTDDPVLRV) the chain is Extracellular. N-linked (GlcNAc...) asparagine glycosylation occurs at Asn-8. Residues 29–49 (VLFTIILCIYLVTVFGNLSTI) form a helical membrane-spanning segment. The Cytoplasmic portion of the chain corresponds to 50–57 (LLIRVSSQ). A helical membrane pass occupies residues 58–78 (LHHPMYFFLSHLASVDIGISS). Over 79-102 (SVTPSMLVNFLLERSTISYLGCGI) the chain is Extracellular. Cys-100 and Cys-193 form a disulfide bridge. The chain crosses the membrane as a helical span at residues 103 to 123 (QLGSADFIASVECFLLAAMAY). Residues 124 to 136 (DRFMAVCNPLLYS) are Cytoplasmic-facing. A helical transmembrane segment spans residues 137–157 (TKMSTQVCVQLVVGSYIGGFL). Residues 158-200 (NASLIVTVYFFSFLFCGPNRIDHFFCDFAPLAELSCSDVSVSV) are Extracellular-facing. The chain crosses the membrane as a helical span at residues 201 to 221 (LIISFSAGSVTMITVFVIVIS). The Cytoplasmic portion of the chain corresponds to 222-241 (YSYILITILKMHSTEGRHKA). The chain crosses the membrane as a helical span at residues 242 to 262 (FSTCTSHLTAVTLYYGTITFI). The Extracellular portion of the chain corresponds to 263–275 (YVMPKSSFSTDQN). A helical membrane pass occupies residues 276–296 (KVVSVFYMVMIPMLNPLIYSL). Topologically, residues 297–315 (SNNEIKGALKRQLGMKTLS) are cytoplasmic.

It belongs to the G-protein coupled receptor 1 family.

It is found in the cell membrane. Its function is as follows. Potential odorant receptor. This Mus musculus (Mouse) protein is Olfactory receptor 5P59.